A 147-amino-acid chain; its full sequence is Interleukin-4 (147 aa).

Residues 1–24 (MGLPAQLPVTLLCLLAGTAHFIQG) form the signal peptide. Cysteine 48 and cysteine 88 are joined by a disulfide. N-linked (GlcNAc...) asparagine glycosylation occurs at asparagine 62.

Belongs to the IL-4/IL-13 family.

The protein localises to the secreted. Its function is as follows. Participates in at least several B-cell activation processes as well as of other cell types. It is a costimulator of DNA-synthesis. It induces the expression of class II MHC molecules on resting B-cells. It enhances both secretion and cell surface expression of IgE and IgG1. It also regulates the expression of the low affinity Fc receptor for IgE (CD23) on both lymphocytes and monocytes. Positively regulates IL31RA expression in macrophages. Stimulates autophagy in dendritic cells by interfering with mTORC1 signaling and through the induction of RUFY4. This is Interleukin-4 (IL4) from Oryctolagus cuniculus (Rabbit).